The sequence spans 80 residues: Putative membrane protein insertion efficiency factor (80 aa).

This sequence belongs to the UPF0161 family.

The protein resides in the cell membrane. Its function is as follows. Could be involved in insertion of integral membrane proteins into the membrane. The polypeptide is Putative membrane protein insertion efficiency factor (Limosilactobacillus fermentum (strain NBRC 3956 / LMG 18251) (Lactobacillus fermentum)).